The primary structure comprises 128 residues: MARIVGVELPGNKKCFVALTYLYGVGRTRAFEILKNTGINPDKRVKDLTDEEVSKITKFIQDHYKVEGELRTDINRNIKRLIDIGCYRGFRHKLGLPVRGQRTRSNARTRKGPRPSRIKTKKKKEQTV.

Residues 97 to 128 are disordered; that stretch reads PVRGQRTRSNARTRKGPRPSRIKTKKKKEQTV. Positions 101-128 are enriched in basic residues; it reads QRTRSNARTRKGPRPSRIKTKKKKEQTV.

It belongs to the universal ribosomal protein uS13 family. In terms of assembly, part of the 30S ribosomal subunit. Forms a loose heterodimer with protein S19. Forms two bridges to the 50S subunit in the 70S ribosome.

In terms of biological role, located at the top of the head of the 30S subunit, it contacts several helices of the 16S rRNA. In the 70S ribosome it contacts the 23S rRNA (bridge B1a) and protein L5 of the 50S subunit (bridge B1b), connecting the 2 subunits; these bridges are implicated in subunit movement. Contacts the tRNAs in the A and P-sites. This is Small ribosomal subunit protein uS13 from Pseudothermotoga lettingae (strain ATCC BAA-301 / DSM 14385 / NBRC 107922 / TMO) (Thermotoga lettingae).